The following is a 299-amino-acid chain: MTKVRKAIIPAAGLGTRFLPATKALAKEMLPIVDKPTIQFIVEEALKSGIEEILIVTGKSKRSIEDHFDSNFELEYNLQAKGKIELLKLVDETTSINLHFIRQSHPRGLGDAVLQAKTFVGNEPFVVMLGDDLMDITNPNVKPLTKQLIDDYEETHAATIAVMRVPHEDVSNYGIIAPQAKAVKGLYSVDTFVEKPQPQDAPSDLAIIGRYLLTPEIFSILEKQEPGAGNEVQLTDAIDTLNKTQRVFAREFKGKRYDVGDKFGFMKTSLDYALKHPQVKDDLKAYIIQLGKALEKTKP.

The protein belongs to the UDPGP type 2 family.

It carries out the reaction alpha-D-glucose 1-phosphate + UTP + H(+) = UDP-alpha-D-glucose + diphosphate. It functions in the pathway carbohydrate metabolism; nucleotide-sugar metabolism. The sequence is that of UTP--glucose-1-phosphate uridylyltransferase 1 (hasC1) from Streptococcus pyogenes serotype M6 (strain ATCC BAA-946 / MGAS10394).